The sequence spans 290 residues: MADSKMLVPELNDAETMGAETSRFEELLLQASKELQQAQTSRPESTQIQPQPGFCIKTNSAEGKVFINICHSPSIPPPADLTEDELLQMLEEDQAGFRIPMSLGEPHAELDAKGQGCTAYDVAVNSDFFRRMQNSDFLRELVITIAREGLEDKYGLQLNPEWRILKNRPFLGSISQQNIRSQQRPRIQELGNLHTPSSPRPEAGPEKPHLSLWLEAPDLLLAEIDLPKLDGALGLSLEVGENRLVMGGPQQLYHLDTYIPLRINCDESKAAFHQKRKQLMVAMPLLSVPS.

The segment covering 34–50 has biased composition (polar residues); the sequence is ELQQAQTSRPESTQIQP. Residues 34 to 53 are disordered; the sequence is ELQQAQTSRPESTQIQPQPG. Ser173 carries the phosphoserine modification.

It belongs to the PIH1 family. As to quaternary structure, component of the R2TP complex composed at least of RUVBL1, RUVBL2, RPAP3 and PIHD1. Component of the PAQosome complex which is responsible for the biogenesis of several protein complexes and which consists of R2TP complex members RUVBL1, RUVBL2, RPAP3 and PIH1D1, URI complex members PFDN2, PFDN6, PDRG1, UXT and URI1 as well as ASDURF, POLR2E and DNAAF10/WDR92. Interacts with phosphorylated TELO2 and mediates interaction of TELO2 with the R2TP complex. Interacts with phosphorylated ECD, EFTUD2/SNRP116, RPB1 and UBR5 and with RPB1 in a phosphorylation-independent manner. Interacts with the core C/D box snoRNP particle components NOP58 and FBL and with RUVBL1/TIP49. Interacts with RPAP3 and DNAAF10. Interacts with histone H4 and with SWI/SNF complex member SMARCB1/SNF5. Interacts with the mTORC1 complex member RPTOR. Interacts with MSL1.

It localises to the nucleus. Functionally, involved in the assembly of C/D box small nucleolar ribonucleoprotein (snoRNP) particles. Recruits the SWI/SNF complex to the core promoter of rRNA genes and enhances pre-rRNA transcription. Mediates interaction of TELO2 with the R2TP complex which is necessary for the stability of MTOR and SMG1. Positively regulates the assembly and activity of the mTORC1 complex. The polypeptide is PIH1 domain-containing protein 1 (PIH1D1) (Bos taurus (Bovine)).